Reading from the N-terminus, the 466-residue chain is Glucose-6-phosphate 1-dehydrogenase 1 (466 aa).

NADP(+) contacts are provided by residues Ser-48, 88-89 (DV), and Lys-141. Substrate contacts are provided by His-171, Lys-175, Glu-209, and Asp-228. His-233 (proton acceptor) is an active-site residue. Residues Lys-319 and Lys-324 each coordinate substrate.

The protein belongs to the glucose-6-phosphate dehydrogenase family.

The catalysed reaction is D-glucose 6-phosphate + NADP(+) = 6-phospho-D-glucono-1,5-lactone + NADPH + H(+). It participates in carbohydrate degradation; pentose phosphate pathway; D-ribulose 5-phosphate from D-glucose 6-phosphate (oxidative stage): step 1/3. Functionally, catalyzes the oxidation of glucose 6-phosphate to 6-phosphogluconolactone. The polypeptide is Glucose-6-phosphate 1-dehydrogenase 1 (Mycobacterium tuberculosis (strain CDC 1551 / Oshkosh)).